A 337-amino-acid polypeptide reads, in one-letter code: 4-hydroxythreonine-4-phosphate dehydrogenase (337 aa).

Substrate-binding residues include H137 and T138. The a divalent metal cation site is built by H167, H212, and H267. Substrate-binding residues include K275, N284, and R293.

It belongs to the PdxA family. As to quaternary structure, homodimer. It depends on Zn(2+) as a cofactor. Mg(2+) is required as a cofactor. Requires Co(2+) as cofactor.

The protein localises to the cytoplasm. It carries out the reaction 4-(phosphooxy)-L-threonine + NAD(+) = 3-amino-2-oxopropyl phosphate + CO2 + NADH. The protein operates within cofactor biosynthesis; pyridoxine 5'-phosphate biosynthesis; pyridoxine 5'-phosphate from D-erythrose 4-phosphate: step 4/5. Its function is as follows. Catalyzes the NAD(P)-dependent oxidation of 4-(phosphooxy)-L-threonine (HTP) into 2-amino-3-oxo-4-(phosphooxy)butyric acid which spontaneously decarboxylates to form 3-amino-2-oxopropyl phosphate (AHAP). This is 4-hydroxythreonine-4-phosphate dehydrogenase from Ectopseudomonas mendocina (strain ymp) (Pseudomonas mendocina).